Reading from the N-terminus, the 523-residue chain is Coatomer subunit delta-2 (523 aa).

The tract at residues 218 to 243 (DSFASKPKGRPSAAATAPGKGLGMKL) is disordered. Residues 282 to 523 (SDPVTVTIEE…RLVTANYQVV (242 aa)) form the MHD domain.

The protein belongs to the adaptor complexes medium subunit family. Delta-COP subfamily. As to quaternary structure, oligomeric complex that consists of at least the alpha, beta, beta', gamma, delta, epsilon and zeta subunits.

It is found in the cytoplasm. The protein localises to the golgi apparatus membrane. The protein resides in the cytoplasmic vesicle. Its subcellular location is the COPI-coated vesicle membrane. The coatomer is a cytosolic protein complex that binds to dilysine motifs and reversibly associates with Golgi non-clathrin-coated vesicles, which further mediate biosynthetic protein transport from the ER, via the Golgi up to the trans Golgi network. Coatomer complex is required for budding from Golgi membranes, and is essential for the retrograde Golgi-to-ER transport of dilysine-tagged proteins. The sequence is that of Coatomer subunit delta-2 from Oryza sativa subsp. japonica (Rice).